Consider the following 70-residue polypeptide: Protein SlyX homolog (70 aa).

The protein belongs to the SlyX family.

The sequence is that of Protein SlyX homolog from Agrobacterium fabrum (strain C58 / ATCC 33970) (Agrobacterium tumefaciens (strain C58)).